Consider the following 533-residue polypeptide: 2,3-bisphosphoglycerate-independent phosphoglycerate mutase (533 aa).

Positions 15 and 65 each coordinate Mn(2+). The active-site Phosphoserine intermediate is the Ser-65. Residues His-126, 156–157, Arg-188, Arg-194, 258–261, and Lys-331 each bind substrate; these read RD and RPDR. Residues Asp-398, His-402, Asp-439, His-440, and His-457 each contribute to the Mn(2+) site.

Belongs to the BPG-independent phosphoglycerate mutase family. In terms of assembly, monomer. Requires Mn(2+) as cofactor.

The catalysed reaction is (2R)-2-phosphoglycerate = (2R)-3-phosphoglycerate. The protein operates within carbohydrate degradation; glycolysis; pyruvate from D-glyceraldehyde 3-phosphate: step 3/5. Its function is as follows. Catalyzes the interconversion of 2-phosphoglycerate and 3-phosphoglycerate. This chain is 2,3-bisphosphoglycerate-independent phosphoglycerate mutase, found in Nostoc sp. (strain PCC 7120 / SAG 25.82 / UTEX 2576).